Reading from the N-terminus, the 849-residue chain is Autoinducer 1 sensor kinase/phosphatase LuxN (849 aa).

Helical transmembrane passes span 9–29 (IVYAKAISLLATVAVVMMWLF), 41–61 (VIFGTHHAAYIAYSVCIIAWI), 160–180 (SYFFIGLVSFVVLTLVNLVAM), 196–216 (IAGILVFMLSTAVIHLGMTYF), 220–242 (FSLTWLPPALSISEMLFVGYALL), 251–275 (YIAYLALSVLLVCAIFVLPLGAIFI), and 283–301 (WLIAIPICALIGITWQLLY). Positions 468–683 (SIAHEMRNPL…EFHLYFPVVP (216 aa)) constitute a Histidine kinase domain. H471 bears the Phosphohistidine; by autocatalysis mark. A Response regulatory domain is found at 722–835 (TVLIVDDKEV…ALRHVLGNWL (114 aa)). D771 is subject to 4-aspartylphosphate.

Its subcellular location is the cell inner membrane. The catalysed reaction is ATP + protein L-histidine = ADP + protein N-phospho-L-histidine.. Functionally, at low cell density, in the absence of AI-1 (autoinducer 1), LuxN has a kinase activity and autophosphorylates on His-471. The phosphoryl group is then transferred on Asp-771 of the response regulator domain. The phosphoryl group is transferred to LuxU, and ultimately to LuxO. At high cell density, in the presence of AI-1, the kinase activity is inactivated, and the response regulator domain has a phosphatase activity. LuxN phosphatase acts on itself. As LuxU could function to establish an equilibrium between the aspartyl-phosphate of LuxN and the aspartyl-phosphate of LuxO, LuxU transfers phosphate from LuxO to LuxN and finally phosphate is drained from the system. The polypeptide is Autoinducer 1 sensor kinase/phosphatase LuxN (luxN) (Vibrio harveyi (Beneckea harveyi)).